Here is a 107-residue protein sequence, read N- to C-terminus: UPF0060 membrane protein Atu1058 (107 aa).

The next 4 helical transmembrane spans lie at 5–25 (LIYVLAAVAEIAGCFSFWAWL), 32–52 (WILLPGMVALAAFAWLLTLVA), 59–79 (AYAAYGGIYIAASLFWLWGVE), and 85–105 (RWDIAGGVVCLAGTAIILFGP).

The protein belongs to the UPF0060 family.

It is found in the cell inner membrane. This chain is UPF0060 membrane protein Atu1058, found in Agrobacterium fabrum (strain C58 / ATCC 33970) (Agrobacterium tumefaciens (strain C58)).